The chain runs to 158 residues: NADPH-dependent 7-cyano-7-deazaguanine reductase (158 aa).

Catalysis depends on Cys-56, which acts as the Thioimide intermediate. The active-site Proton donor is the Asp-63. Residues 78 to 80 (VES) and 97 to 98 (HE) contribute to the substrate site.

It belongs to the GTP cyclohydrolase I family. QueF type 1 subfamily.

The protein localises to the cytoplasm. It carries out the reaction 7-aminomethyl-7-carbaguanine + 2 NADP(+) = 7-cyano-7-deazaguanine + 2 NADPH + 3 H(+). It functions in the pathway tRNA modification; tRNA-queuosine biosynthesis. Its function is as follows. Catalyzes the NADPH-dependent reduction of 7-cyano-7-deazaguanine (preQ0) to 7-aminomethyl-7-deazaguanine (preQ1). The chain is NADPH-dependent 7-cyano-7-deazaguanine reductase from Rhodopseudomonas palustris (strain BisB5).